A 542-amino-acid chain; its full sequence is Propane 2-monooxygenase, hydroxylase component large subunit (542 aa).

6 residues coordinate Fe cation: E97, E127, H130, E192, E226, and H229.

This sequence belongs to the TmoA/XamoA family. The propane 2-monooxygenase multicomponent enzyme system is composed of an electron transfer component and a monooxygenase component interacting with the effector protein MimD. The electron transfer component is composed of a reductase (MimB), and the monooxygenase component is formed by a large subunit (MimA) and a small subunit (MimC). Requires the presence of the chaperonin-like protein MimG to ensure a productive folding, resulting of a soluble MimA, which leads to the active form of MimABCD. It depends on Fe(2+) as a cofactor.

The enzyme catalyses propane + NADH + O2 + H(+) = propan-2-ol + NAD(+) + H2O. It carries out the reaction acetone + NADH + O2 + H(+) = hydroxyacetone + NAD(+) + H2O. It catalyses the reaction butan-2-one + NADH + O2 + H(+) = 1-hydroxy-2-butanone + NAD(+) + H2O. The catalysed reaction is phenol + NADH + O2 + H(+) = hydroquinone + NAD(+) + H2O. Its function is as follows. Component of the propane 2-monooxygenase multicomponent enzyme system which is involved in the degradation of propane via the O2-dependent hydroxylation of propane. Also involved in the degradation of acetone via the O2-dependent hydroxylation of acetone. Also able to catalyze the oxidation of phenol, methylethylketone (2-butanone), 1-propanol and 2-propanol. This Mycolicibacterium goodii (Mycobacterium goodii) protein is Propane 2-monooxygenase, hydroxylase component large subunit.